Here is a 460-residue protein sequence, read N- to C-terminus: CUGBP Elav-like family member 6 (460 aa).

Residues 1–10 show a composition bias toward low complexity; the sequence is MAAAPGGSAP. The interval 1 to 37 is disordered; the sequence is MAAAPGGSAPPAGPSPRLAFSTADSGGGMSGLNPGPA. RRM domains lie at 46-127 and 134-214; these read IKLF…PAAS and RKLF…LADT. Positions 316-336 are disordered; the sequence is NGFGSLTPQSNGQPGSDTLYN. Positions 319–336 are enriched in polar residues; it reads GSLTPQSNGQPGSDTLYN. The 79-residue stretch at 375–453 folds into the RRM 3 domain; it reads CNLFIYHLPQ…KRLKVQLKRP (79 aa).

This sequence belongs to the CELF/BRUNOL family.

It localises to the nucleus. The protein resides in the cytoplasm. In terms of biological role, RNA-binding protein implicated in the regulation of pre-mRNA alternative splicing. Mediates exon inclusion and/or exclusion in pre-mRNA that are subject to tissue-specific and developmentally regulated alternative splicing. Specifically activates exon 5 inclusion of TNNT2 in a muscle-specific splicing enhancer (MSE)-dependent manner. Promotes also exon exclusion of INSR pre-mRNA. The protein is CUGBP Elav-like family member 6 (Celf6) of Mus musculus (Mouse).